A 397-amino-acid polypeptide reads, in one-letter code: 1-deoxy-D-xylulose 5-phosphate reductoisomerase (397 aa).

The NADPH site is built by Thr12, Gly13, Ser14, Ile15, Gly38, Lys39, Asn40, and Asn126. Lys127 is a binding site for 1-deoxy-D-xylulose 5-phosphate. Residue Glu128 participates in NADPH binding. Asp152 lines the Mn(2+) pocket. Residues Ser153, Glu154, Ser188, and His211 each contribute to the 1-deoxy-D-xylulose 5-phosphate site. Glu154 provides a ligand contact to Mn(2+). Gly217 provides a ligand contact to NADPH. 1-deoxy-D-xylulose 5-phosphate is bound by residues Ser224, Asn229, Lys230, and Glu233. Residue Glu233 coordinates Mn(2+).

The protein belongs to the DXR family. It depends on Mg(2+) as a cofactor. Mn(2+) serves as cofactor.

The enzyme catalyses 2-C-methyl-D-erythritol 4-phosphate + NADP(+) = 1-deoxy-D-xylulose 5-phosphate + NADPH + H(+). It participates in isoprenoid biosynthesis; isopentenyl diphosphate biosynthesis via DXP pathway; isopentenyl diphosphate from 1-deoxy-D-xylulose 5-phosphate: step 1/6. In terms of biological role, catalyzes the NADPH-dependent rearrangement and reduction of 1-deoxy-D-xylulose-5-phosphate (DXP) to 2-C-methyl-D-erythritol 4-phosphate (MEP). In Haemophilus influenzae (strain 86-028NP), this protein is 1-deoxy-D-xylulose 5-phosphate reductoisomerase.